A 376-amino-acid chain; its full sequence is Putative cytosolic 5'-nucleotidase 3 (376 aa).

The Nucleophile role is filled by Asp119. Mg(2+)-binding residues include Asp119 and Asp121. The active-site Proton donor is the Asp121. Substrate contacts are provided by residues Glu168, Ser189, 236-237 (SA), and Lys286. A Mg(2+)-binding site is contributed by Asp312.

This sequence belongs to the pyrimidine 5'-nucleotidase family.

It is found in the cytoplasm. The enzyme catalyses a ribonucleoside 5'-phosphate + H2O = a ribonucleoside + phosphate. The chain is Putative cytosolic 5'-nucleotidase 3 from Caenorhabditis elegans.